A 201-amino-acid polypeptide reads, in one-letter code: Histidinol dehydrogenase (201 aa).

It belongs to the histidinol dehydrogenase family. As to quaternary structure, homodimer. Requires Zn(2+) as cofactor.

The catalysed reaction is L-histidinol + 2 NAD(+) + H2O = L-histidine + 2 NADH + 3 H(+). It functions in the pathway amino-acid biosynthesis; L-histidine biosynthesis; L-histidine from 5-phospho-alpha-D-ribose 1-diphosphate: step 9/9. Catalyzes the sequential NAD-dependent oxidations of L-histidinol to L-histidinaldehyde and then to L-histidine. This chain is Histidinol dehydrogenase (hisD), found in Buchnera aphidicola subsp. Diuraphis noxia.